The following is a 576-amino-acid chain: MGEALSNLEIARGAKLLPIEEVGRSMGLREERHLEPYGRHVAKVDLCAIEDLSERPKAKYILVSAITPTPLGEGKTTTTVGLGQAFSHIGKRATIAIRQASMGPAFGIKGGAAGGGYSQVVPMERLNLHLTGDLHAVTEAHNMLAAMIDNHLYHGNGLGIEPHSISWRRVMDVNDRSLRNIVIGLGARTDGVPRQSGFDITAASEVMAILALASSLEDLRERLGRIVIGHDREGNPVSAEDVRGAGAMAVILKEAIKPNLMQTLEGTPALVHAGPFGNIATGNSSVVADLIGIRTADYLITEAGFGADMGAERFFNIKCRISGLEPDAAVVVATVRALKAHSGRYQIKAGAPLPEELLEENPQDVLAGAENLKKQIENIKLHGVPAVVAINAFPTDHPSEHKAIEEAAKEVGARCAVCRHFTEGGKGAVELARALEETIEENERERRRGGGGSFRFLYPLEMPLKQKIETIAREVYGAEGVEYDAEALRALEGFERAGFGRLPVCLAKTHLSLSSDPALKGAPRGWKLSVREVRASVGAGFIYPICGQMRTMPGLSAHPAAERIDLDGEGNVVGLF.

Residue 69 to 76 (TPLGEGKT) participates in ATP binding.

Belongs to the formate--tetrahydrofolate ligase family.

The enzyme catalyses (6S)-5,6,7,8-tetrahydrofolate + formate + ATP = (6R)-10-formyltetrahydrofolate + ADP + phosphate. Its pathway is one-carbon metabolism; tetrahydrofolate interconversion. The protein is Formate--tetrahydrofolate ligase 2 of Rubrobacter xylanophilus (strain DSM 9941 / JCM 11954 / NBRC 16129 / PRD-1).